Reading from the N-terminus, the 159-residue chain is Transcription antitermination protein NusB (159 aa).

Residues 1 to 20 (MNKNTQGKPSGKPVRRDGVD) are disordered.

It belongs to the NusB family.

Functionally, involved in transcription antitermination. Required for transcription of ribosomal RNA (rRNA) genes. Binds specifically to the boxA antiterminator sequence of the ribosomal RNA (rrn) operons. The chain is Transcription antitermination protein NusB from Stenotrophomonas maltophilia (strain R551-3).